Reading from the N-terminus, the 325-residue chain is Aldo-keto reductase family 1 member A1 (325 aa).

Residue Thr2 is modified to N-acetylthreonine. A Phosphoserine modification is found at Ser4. NADP(+)-binding positions include Gly11–Gly20, Thr21, and Trp22. The N-linked (Glc) (glycation) lysine glycan is linked to Lys23. Phosphoserine is present on Ser38. Asp45 provides a ligand contact to NADP(+). Tyr50 functions as the Proton donor in the catalytic mechanism. 2 N-linked (Glc) (glycation) lysine glycosylation sites follow: Lys68 and Lys85. The residue at position 127 (Lys127) is an N6-acetyllysine; alternate. Position 127 is an N6-succinyllysine; alternate (Lys127). N-linked (Glc) (glycation) lysine glycosylation occurs at Lys141. Lys145 bears the N6-succinyllysine mark. Lys153 carries N-linked (Glc) (glycation) lysine glycosylation. Residues Ser162, Asn163, Ser211, Leu213, Ser215, Ser216, Lys263, Ser264, Ile265, Thr266, Arg269, Gln272, and Asn273 each coordinate NADP(+). Ser211 carries the phosphoserine modification.

Belongs to the aldo/keto reductase family. As to quaternary structure, monomer. In terms of tissue distribution, widely expressed.

The protein resides in the cytoplasm. It localises to the cytosol. Its subcellular location is the apical cell membrane. It catalyses the reaction a primary alcohol + NADP(+) = an aldehyde + NADPH + H(+). The enzyme catalyses L-gulonate + NADP(+) = aldehydo-D-glucuronate + NADPH + H(+). It carries out the reaction L-gulono-1,4-lactone + NADP(+) = D-glucurono-3,6-lactone + NADPH + H(+). The catalysed reaction is allyl alcohol + NADP(+) = acrolein + NADPH + H(+). It catalyses the reaction glycerol + NADP(+) = D-glyceraldehyde + NADPH + H(+). The enzyme catalyses glycerol + NADP(+) = L-glyceraldehyde + NADPH + H(+). It carries out the reaction hydroxyacetone + NADP(+) = methylglyoxal + NADPH + H(+). The catalysed reaction is 3-deoxyfructose + NADP(+) = 3-deoxyglucosone + NADPH + H(+). It catalyses the reaction (R)-mevalonate + NADP(+) = (R)-mevaldate + NADPH + H(+). The enzyme catalyses pyridine 3-methanol + NADP(+) = pyridine-3-carbaldehyde + NADPH + H(+). It carries out the reaction S-nitroso-CoA + NADPH + H(+) = sulfinamide-CoA + NADP(+). The catalysed reaction is S-nitrosoglutathione + NADPH + H(+) = S-(hydroxysulfenamide)glutathione + NADP(+). Functionally, catalyzes the NADPH-dependent reduction of a wide variety of carbonyl-containing compounds to their corresponding alcohols. Displays enzymatic activity towards endogenous metabolites such as aromatic and aliphatic aldehydes, ketones, monosaccharides and bile acids. Plays an important role in ascorbic acid biosynthesis by catalyzing the reduction of D-glucuronic acid and D-glucurono-gamma-lactone. Functions as a detoxifiying enzyme by reducing a range of toxic aldehydes. Reduces methylglyoxal and 3-deoxyglucosone, which are present at elevated levels under hyperglycemic conditions and are cytotoxic. Involved also in the detoxification of lipid-derived aldehydes like acrolein. Plays a role in the activation of procarcinogens, such as polycyclic aromatic hydrocarbon trans-dihydrodiols, and in the metabolism of various xenobiotics and drugs. Also acts as an inhibitor of protein S-nitrosylation by mediating degradation of S-nitroso-coenzyme A (S-nitroso-CoA), a cofactor required to S-nitrosylate proteins. S-nitroso-CoA reductase activity is involved in reprogramming intermediary metabolism in renal proximal tubules, notably by inhibiting protein S-nitrosylation of isoform 2 of PKM (PKM2). Also acts as a S-nitroso-glutathione reductase by catalyzing the NADPH-dependent reduction of S-nitrosoglutathione. Displays no reductase activity towards retinoids. The chain is Aldo-keto reductase family 1 member A1 (Akr1a1) from Rattus norvegicus (Rat).